The chain runs to 517 residues: Ubiquitin carboxyl-terminal hydrolase 30 (517 aa).

At 1 to 35 the chain is on the mitochondrial intermembrane side; the sequence is MLSSRAQAARTAADKALQRFLRTGAAVRYKVMKNW. A helical membrane pass occupies residues 36–56; sequence GVIGGIAAALAAGIYVIWGPI. Residues 57-517 are Cytoplasmic-facing; that stretch reads TERKKRRKGL…QQGREYRSEE (461 aa). The 435-residue stretch at 68-502 folds into the USP domain; that stretch reads PGLVNLGNTC…SAYLLFYERV (435 aa). The active-site Nucleophile is Cys-77. Residues Lys-235 and Lys-289 each participate in a glycyl lysine isopeptide (Lys-Gly) (interchain with G-Cter in ubiquitin) cross-link. Residues 364-395 are disordered; sequence SQHGPKATESPGSALGVQDTQAAPKPGLSQPA. The active-site Proton acceptor is the His-452.

It belongs to the peptidase C19 family. Post-translationally, ubiquitinated by parkin (PRKN) at Lys-235 and Lys-289, leading to its degradation.

Its subcellular location is the mitochondrion outer membrane. It carries out the reaction Thiol-dependent hydrolysis of ester, thioester, amide, peptide and isopeptide bonds formed by the C-terminal Gly of ubiquitin (a 76-residue protein attached to proteins as an intracellular targeting signal).. Its activity is regulated as follows. Inhibited by the diterpenoid derivative 15-oxospiramilactone (S3). Its function is as follows. Deubiquitinating enzyme tethered to the mitochondrial outer membrane that acts as a key inhibitor of mitophagy by counteracting the action of parkin (PRKN): hydrolyzes ubiquitin attached by parkin on target proteins, such as RHOT1/MIRO1 and TOMM20, thereby blocking parkin's ability to drive mitophagy. Preferentially cleaves 'Lys-6'- and 'Lys-11'-linked polyubiquitin chains, 2 types of linkage that participate in mitophagic signaling. Does not cleave efficiently polyubiquitin phosphorylated at 'Ser-65'. Acts as a negative regulator of mitochondrial fusion by mediating deubiquitination of MFN1 and MFN2. This is Ubiquitin carboxyl-terminal hydrolase 30 (Usp30) from Rattus norvegicus (Rat).